A 206-amino-acid polypeptide reads, in one-letter code: Small ribosomal subunit protein uS4 (206 aa).

The S4 RNA-binding domain maps to 96–157 (SRLDNVVYRM…KAQKQLRVQA (62 aa)).

Belongs to the universal ribosomal protein uS4 family. In terms of assembly, part of the 30S ribosomal subunit. Contacts protein S5. The interaction surface between S4 and S5 is involved in control of translational fidelity.

Its function is as follows. One of the primary rRNA binding proteins, it binds directly to 16S rRNA where it nucleates assembly of the body of the 30S subunit. With S5 and S12 plays an important role in translational accuracy. This chain is Small ribosomal subunit protein uS4, found in Alkalilimnicola ehrlichii (strain ATCC BAA-1101 / DSM 17681 / MLHE-1).